We begin with the raw amino-acid sequence, 213 residues long: MQLPDPRMIQLVMSLRGGGVTDAKVMGALERTPRHLFVPQRFGDQAYDDRALPIDCGQTISQPLIVALMTQALKLDDRCKVLEIGTGSGYQAAVLARLARRVYSVERYRTLSREAEARFEAMRLTNIVTRIGDGTQGWPEQAPFDRIILTASAPTRPDVILEQLKDGGIAVAPVDRENRQVLVRYARHGDDITETDLMDVRFVPLVKGEARAL.

S61 is a catalytic residue.

It belongs to the methyltransferase superfamily. L-isoaspartyl/D-aspartyl protein methyltransferase family.

Its subcellular location is the cytoplasm. The enzyme catalyses [protein]-L-isoaspartate + S-adenosyl-L-methionine = [protein]-L-isoaspartate alpha-methyl ester + S-adenosyl-L-homocysteine. In terms of biological role, catalyzes the methyl esterification of L-isoaspartyl residues in peptides and proteins that result from spontaneous decomposition of normal L-aspartyl and L-asparaginyl residues. It plays a role in the repair and/or degradation of damaged proteins. This chain is Protein-L-isoaspartate O-methyltransferase, found in Maricaulis maris (strain MCS10) (Caulobacter maris).